A 409-amino-acid polypeptide reads, in one-letter code: Ribose-phosphate pyrophosphokinase 3, chloroplastic (409 aa).

2 stretches are compositionally biased toward low complexity: residues 1–16 and 34–43; these read MATAASASASASPAAA and PASAFARPSP. The interval 1–43 is disordered; it reads MATAASASASASPAAAFGAKTRRPGPSPSPSPSPASAFARPSP. A chloroplast-targeting transit peptide spans 1–44; the sequence is MATAASASASASPAAAFGAKTRRPGPSPSPSPSPASAFARPSPR. Residues Asp-229 and His-231 each contribute to the Mg(2+) site. A binding of phosphoribosylpyrophosphate region spans residues 312–327; that stretch reads GRHVVIVDDLVQSGGT.

It belongs to the ribose-phosphate pyrophosphokinase family. The cofactor is Mg(2+).

It is found in the plastid. The protein localises to the chloroplast. It catalyses the reaction D-ribose 5-phosphate + ATP = 5-phospho-alpha-D-ribose 1-diphosphate + AMP + H(+). In Oryza sativa subsp. japonica (Rice), this protein is Ribose-phosphate pyrophosphokinase 3, chloroplastic.